We begin with the raw amino-acid sequence, 127 residues long: MARVAGVDLPRNKQARIALTYIYGIGNPRALRILTAANVDPFRKIQDLSEDEVNRIRQVIEAEGQVEGDLRKDVAMHIKRLIEIQSYRGLRHRRSLPVRGQRTHTNARTRKGPRRGTVAGKKKATKT.

The segment at 93 to 127 is disordered; it reads RRSLPVRGQRTHTNARTRKGPRRGTVAGKKKATKT.

Belongs to the universal ribosomal protein uS13 family. Part of the 30S ribosomal subunit. Forms a loose heterodimer with protein S19. Forms two bridges to the 50S subunit in the 70S ribosome.

Functionally, located at the top of the head of the 30S subunit, it contacts several helices of the 16S rRNA. In the 70S ribosome it contacts the 23S rRNA (bridge B1a) and protein L5 of the 50S subunit (bridge B1b), connecting the 2 subunits; these bridges are implicated in subunit movement. Contacts the tRNAs in the A and P-sites. The sequence is that of Small ribosomal subunit protein uS13 from Acidobacterium capsulatum (strain ATCC 51196 / DSM 11244 / BCRC 80197 / JCM 7670 / NBRC 15755 / NCIMB 13165 / 161).